A 561-amino-acid polypeptide reads, in one-letter code: Probable xyloglucan galactosyltransferase GT20 (561 aa).

Topologically, residues 1-31 are cytoplasmic; it reads MVSKRKSRTSKTIEDSCIHLCSVFFRFLYYT. A helical; Signal-anchor for type II membrane protein membrane pass occupies residues 32-52; it reads LPALFLFFFLLYLCLSFTTGI. Over 53–561 the chain is Lumenal; the sequence is SYNNFHMCIF…LLKKINRSVV (509 aa). Residues N87, N253, N277, N418, N421, and N557 are each glycosylated (N-linked (GlcNAc...) asparagine).

This sequence belongs to the glycosyltransferase 47 family. As to expression, expressed in hydathodes.

It is found in the golgi apparatus membrane. Its function is as follows. Functions in xyloglucan synthesis by adding side chains to the xylosylated glucan backbone. Involved in the galactosylation of hemicellulose xyloglucan. The chain is Probable xyloglucan galactosyltransferase GT20 from Arabidopsis thaliana (Mouse-ear cress).